The sequence spans 269 residues: Cleavage and polyadenylation specificity factor subunit 4 (269 aa).

5 C3H1-type zinc fingers span residues 35–61 (KSGA…RHIS), 62–89 (GEKT…HEYD), 90–117 (MTKM…HIDP), 118–142 (ESKI…RHRH), and 143–169 (TRRV…HPRF). The interval 173–199 (MGTTEQPPLPQQTQPPAKQSNNPPLQR) is disordered. Phosphoserine is present on residues Ser200, Ser202, and Ser212. A CCHC-type zinc finger spans residues 243-260 (VTCYKCGEKGHYANRCTK). Ser267 carries the phosphoserine modification.

The protein belongs to the CPSF4/YTH1 family. As to quaternary structure, component of the cleavage and polyadenylation specificity factor (CPSF) complex, composed of CPSF1, CPSF2, CPSF3, CPSF4 and FIP1L1. Interacts with FIP1L1. (Microbial infection) Interacts with influenza A virus NS1 blocks processing of pre-mRNAs, thereby preventing nuclear export of host cell mRNAs.

The protein localises to the nucleus. In terms of biological role, component of the cleavage and polyadenylation specificity factor (CPSF) complex that play a key role in pre-mRNA 3'-end formation, recognizing the AAUAAA signal sequence and interacting with poly(A) polymerase and other factors to bring about cleavage and poly(A) addition. CPSF4 binds RNA polymers with a preference for poly(U). The sequence is that of Cleavage and polyadenylation specificity factor subunit 4 (CPSF4) from Homo sapiens (Human).